Here is a 216-residue protein sequence, read N- to C-terminus: Adenylate kinase (216 aa).

11–16 (GSGKGT) is an ATP binding site. Positions 31-60 (ATGDLFRKAIERGDELGDTVKSYMERGELV) are NMP. AMP contacts are provided by residues Thr32, Arg37, 58–60 (ELV), 86–89 (GFPR), and Gln93. An LID region spans residues 127-163 (GRWVCRSCQSPYQCGCAEVAEGKCSRCQGELYQRPDD). Residue Arg128 coordinates ATP. The Zn(2+) site is built by Cys131, Cys134, Cys150, and Cys153. Residues Arg160 and Arg171 each coordinate AMP. Residue Ala199 coordinates ATP.

Belongs to the adenylate kinase family. As to quaternary structure, monomer.

It localises to the cytoplasm. The enzyme catalyses AMP + ATP = 2 ADP. It participates in purine metabolism; AMP biosynthesis via salvage pathway; AMP from ADP: step 1/1. In terms of biological role, catalyzes the reversible transfer of the terminal phosphate group between ATP and AMP. Plays an important role in cellular energy homeostasis and in adenine nucleotide metabolism. The polypeptide is Adenylate kinase (Dehalococcoides mccartyi (strain ATCC BAA-2266 / KCTC 15142 / 195) (Dehalococcoides ethenogenes (strain 195))).